The primary structure comprises 335 residues: Holliday junction branch migration complex subunit RuvB (335 aa).

The large ATPase domain (RuvB-L) stretch occupies residues 4-184; that stretch reads ADRIISTSAK…FGIVQRLEFY (181 aa). Residues I23, R24, G65, K68, T69, T70, 131-133, R174, Y184, and R221 contribute to the ATP site; that span reads EDY. A Mg(2+)-binding site is contributed by T69. Residues 185-255 are small ATPAse domain (RuvB-S); that stretch reads AVEDLTSIVA…SAKAALLMLD (71 aa). A head domain (RuvB-H) region spans residues 258–335; sequence DAGFDYLDRK…RYFGLEKLTE (78 aa). R294, R313, and R318 together coordinate DNA.

The protein belongs to the RuvB family. Homohexamer. Forms an RuvA(8)-RuvB(12)-Holliday junction (HJ) complex. HJ DNA is sandwiched between 2 RuvA tetramers; dsDNA enters through RuvA and exits via RuvB. An RuvB hexamer assembles on each DNA strand where it exits the tetramer. Each RuvB hexamer is contacted by two RuvA subunits (via domain III) on 2 adjacent RuvB subunits; this complex drives branch migration. In the full resolvosome a probable DNA-RuvA(4)-RuvB(12)-RuvC(2) complex forms which resolves the HJ.

It is found in the cytoplasm. The catalysed reaction is ATP + H2O = ADP + phosphate + H(+). Functionally, the RuvA-RuvB-RuvC complex processes Holliday junction (HJ) DNA during genetic recombination and DNA repair, while the RuvA-RuvB complex plays an important role in the rescue of blocked DNA replication forks via replication fork reversal (RFR). RuvA specifically binds to HJ cruciform DNA, conferring on it an open structure. The RuvB hexamer acts as an ATP-dependent pump, pulling dsDNA into and through the RuvAB complex. RuvB forms 2 homohexamers on either side of HJ DNA bound by 1 or 2 RuvA tetramers; 4 subunits per hexamer contact DNA at a time. Coordinated motions by a converter formed by DNA-disengaged RuvB subunits stimulates ATP hydrolysis and nucleotide exchange. Immobilization of the converter enables RuvB to convert the ATP-contained energy into a lever motion, pulling 2 nucleotides of DNA out of the RuvA tetramer per ATP hydrolyzed, thus driving DNA branch migration. The RuvB motors rotate together with the DNA substrate, which together with the progressing nucleotide cycle form the mechanistic basis for DNA recombination by continuous HJ branch migration. Branch migration allows RuvC to scan DNA until it finds its consensus sequence, where it cleaves and resolves cruciform DNA. The chain is Holliday junction branch migration complex subunit RuvB from Pasteurella multocida (strain Pm70).